Consider the following 367-residue polypeptide: Peptide chain release factor 2 (367 aa).

Gln250 is modified (N5-methylglutamine).

This sequence belongs to the prokaryotic/mitochondrial release factor family. Methylated by PrmC. Methylation increases the termination efficiency of RF2.

The protein resides in the cytoplasm. In terms of biological role, peptide chain release factor 2 directs the termination of translation in response to the peptide chain termination codons UGA and UAA. The polypeptide is Peptide chain release factor 2 (Mycobacteroides abscessus (strain ATCC 19977 / DSM 44196 / CCUG 20993 / CIP 104536 / JCM 13569 / NCTC 13031 / TMC 1543 / L948) (Mycobacterium abscessus)).